Consider the following 188-residue polypeptide: Aspartic protease inhibitor 11 (188 aa).

Residue asparagine 19 is glycosylated (N-linked (GlcNAc...) asparagine). Cystine bridges form between cysteine 48–cysteine 93, cysteine 142–cysteine 159, and cysteine 150–cysteine 153.

The protein belongs to the protease inhibitor I3 (leguminous Kunitz-type inhibitor) family.

The protein resides in the vacuole. Inhibitor of cathepsin D (aspartic protease) and trypsin (serine protease). May protect the plant by inhibiting proteases of invading organisms. This chain is Aspartic protease inhibitor 11, found in Solanum tuberosum (Potato).